Here is a 1442-residue protein sequence, read N- to C-terminus: ABC transporter G family member 11 (1442 aa).

Residues L125–P373 form the ABC transporter 1 domain. One can recognise an ABC transmembrane type-2 1 domain in the interval L478–D718. 6 consecutive transmembrane segments (helical) span residues F482 to F502, A518 to F538, I567 to L587, G592 to F612, N627 to P647, and I737 to I757. The ABC transporter 2 domain maps to F808–V1052. ATP is bound at residue G844–T851. Residues Y1144 to A1369 form the ABC transmembrane type-2 2 domain. The next 6 helical transmembrane spans lie at Y1147–L1167, I1181–I1201, F1220–F1240, F1259–V1279, M1286–V1306, and V1416–L1436.

This sequence belongs to the ABC transporter superfamily. ABCG family. PDR (TC 3.A.1.205) subfamily.

Its subcellular location is the membrane. In Dictyostelium discoideum (Social amoeba), this protein is ABC transporter G family member 11 (abcG11).